We begin with the raw amino-acid sequence, 275 residues long: Mitochondrial outer membrane porin (275 aa).

It belongs to the eukaryotic mitochondrial porin (TC 1.B.8.1) family.

The protein localises to the mitochondrion outer membrane. Its function is as follows. Forms a channel through the cell membrane that allows diffusion of small hydrophilic molecules. The channel adopts an open conformation at low or zero membrane potential and a closed conformation at potentials above 30-40 mV. The open state has a weak anion selectivity whereas the closed state is cation-selective. In Triticum aestivum (Wheat), this protein is Mitochondrial outer membrane porin (VDAC1).